The following is a 941-amino-acid chain: Probable lipoxygenase 8, chloroplastic (941 aa).

Disordered stretches follow at residues 1-22 and 45-68; these read MLRP…SSSS and LIAG…VVRC. Residues 1–67 constitute a chloroplast transit peptide; it reads MLRPQLNPSS…QQGRQRVVVR (67 aa). In terms of domain architecture, PLAT spans 100 to 236; sequence AVATIKVTVE…SIDEGTPGKR (137 aa). In terms of domain architecture, Lipoxygenase spans 242-941; that stretch reads AYLPGQTPAG…GMGIPNSTSI (700 aa). Disordered stretches follow at residues 255-274 and 288-331; these read YREE…READ and NPDS…RKGN. Basic and acidic residues predominate over residues 319-331; that stretch reads SKKDPKSETRKGN. Fe cation contacts are provided by H598, H603, H790, N794, and I941.

It belongs to the lipoxygenase family. Fe cation serves as cofactor.

The protein localises to the plastid. The protein resides in the chloroplast. The enzyme catalyses (9Z,12Z)-octadecadienoate + O2 = (13S)-hydroperoxy-(9Z,11E)-octadecadienoate. It carries out the reaction (9Z,12Z,15Z)-octadecatrienoate + O2 = (13S)-hydroperoxy-(9Z,11E,15Z)-octadecatrienoate. It participates in lipid metabolism; oxylipin biosynthesis. Plant lipoxygenase may be involved in a number of diverse aspects of plant physiology including growth and development, pest resistance, and senescence or responses to wounding. It catalyzes the hydroperoxidation of lipids containing a cis,cis-1,4-pentadiene structure. The protein is Probable lipoxygenase 8, chloroplastic (CM-LOX2) of Oryza sativa subsp. japonica (Rice).